A 127-amino-acid chain; its full sequence is Ribonuclease P protein component (127 aa).

The protein belongs to the RnpA family. In terms of assembly, consists of a catalytic RNA component (M1 or rnpB) and a protein subunit.

It catalyses the reaction Endonucleolytic cleavage of RNA, removing 5'-extranucleotides from tRNA precursor.. Its function is as follows. RNaseP catalyzes the removal of the 5'-leader sequence from pre-tRNA to produce the mature 5'-terminus. It can also cleave other RNA substrates such as 4.5S RNA. The protein component plays an auxiliary but essential role in vivo by binding to the 5'-leader sequence and broadening the substrate specificity of the ribozyme. The protein is Ribonuclease P protein component of Agrobacterium fabrum (strain C58 / ATCC 33970) (Agrobacterium tumefaciens (strain C58)).